The sequence spans 79 residues: Small ribosomal subunit protein uS17 (79 aa).

It belongs to the universal ribosomal protein uS17 family. As to quaternary structure, part of the 30S ribosomal subunit.

Functionally, one of the primary rRNA binding proteins, it binds specifically to the 5'-end of 16S ribosomal RNA. This is Small ribosomal subunit protein uS17 from Mesorhizobium japonicum (strain LMG 29417 / CECT 9101 / MAFF 303099) (Mesorhizobium loti (strain MAFF 303099)).